An 816-amino-acid polypeptide reads, in one-letter code: Metabotropic glutamate receptor-like protein E (816 aa).

A signal peptide spans 1–27; the sequence is MKIKIGNILKNVVILVIFSLFISKINS. Residues 28–436 are Extracellular-facing; the sequence is EVVKPNPAKP…QVVVFDRTLN (409 aa). Residues Asn-68, Asn-311, and Asn-388 are each glycosylated (N-linked (GlcNAc...) asparagine). A helical transmembrane segment spans residues 437 to 457; it reads IVLGVITGVCVLIVIGIGSVI. The Cytoplasmic portion of the chain corresponds to 458–469; that stretch reads ALQWRKFRYSSP. The helical transmembrane segment at 470-490 threads the bilayer; the sequence is LFCMFIIIGALMGLASVFTLL. At 491–496 the chain is on the extracellular side; sequence PTPTTP. The helical transmembrane segment at 497–517 threads the bilayer; sequence LCSGFPWLLGLGYVIVFGTLF. Over 518-541 the chain is Cytoplasmic; that stretch reads TKTWRTWRLFSNARKFKIIRITNK. Residues 542–562 form a helical membrane-spanning segment; sequence FIITLVGGFVLLESIFMIIWT. The Extracellular segment spans residues 563–590; sequence AVDRPIPLAEPIFKAGEAQLQCTSDSEA. The chain crosses the membrane as a helical span at residues 591–611; sequence WWYVFVFYKVFYILFGVFLAF. At 612 to 625 the chain is on the cytoplasmic side; the sequence is KTRNVVDSLNESKP. Residues 626-646 form a helical membrane-spanning segment; sequence ITLALYNLTFVMVVAIALGFI. Over 647–653 the chain is Extracellular; that stretch reads LRDNPIA. A helical transmembrane segment spans residues 654–674; it reads IIVIQTIAILLGFTVTVSVLF. Residues 675 to 816 are Cytoplasmic-facing; that stretch reads LPKVWMILSG…KKKKKKNNNK (142 aa). The segment at 697 to 718 is disordered; the sequence is DSMGRSNGNTTEAESTRGYTNK.

Belongs to the G-protein coupled receptor 3 family.

Its subcellular location is the membrane. Its function is as follows. May be involved in early development in cAMP sensing and subsequent chemotactic response. Probable receptor of GABA and glutamate, leading respectively to the induction or inhibition of SDF-2 formation. The sequence is that of Metabotropic glutamate receptor-like protein E (grlE) from Dictyostelium discoideum (Social amoeba).